Reading from the N-terminus, the 257-residue chain is Thioredoxin-dependent peroxide reductase, mitochondrial (257 aa).

The transit peptide at 1-62 (MAATAGRLFR…FAFSTSSSYH (62 aa)) directs the protein to the mitochondrion. Positions 64-222 (PAVTQHAPYF…TLRLVKAFQF (159 aa)) constitute a Thioredoxin domain. Lys-84 is modified (N6-succinyllysine). Position 92 is an N6-acetyllysine; alternate (Lys-92). Lys-92 carries the N6-succinyllysine; alternate modification. Cys-109 serves as the catalytic Cysteine sulfenic acid (-SOH) intermediate. The residue at position 147 (Thr-147) is a Phosphothreonine.

This sequence belongs to the peroxiredoxin family. AhpC/Prx1 subfamily. In terms of assembly, homodimer; disulfide-linked, upon oxidation. 6 homodimers assemble to form a ring-like dodecamer. Interacts with NEK6. Interacts with LRRK2. Interacts with MAP3K13. Interacts with RPS6KC1 (via PX domain). In terms of processing, phosphorylated by LRRK2; phosphorylation reduces perodixase activity. Post-translationally, the enzyme can be inactivated by further oxidation of the cysteine sulfenic acid (C(P)-SOH) to sulphinic acid (C(P)-SO2H) and sulphonic acid (C(P)-SO3H) instead of its condensation to a disulfide bond. S-palmitoylated. Predominantly expressed in adrenal cortex. Also detected in liver, renal cortex and medulla, and adrenal medulla (at protein level).

It localises to the mitochondrion matrix. It is found in the cytoplasm. The protein localises to the early endosome. The enzyme catalyses a hydroperoxide + [thioredoxin]-dithiol = an alcohol + [thioredoxin]-disulfide + H2O. Functionally, thiol-specific peroxidase that catalyzes the reduction of hydrogen peroxide and organic hydroperoxides to water and alcohols, respectively. Plays a role in cell protection against oxidative stress by detoxifying peroxides. Acts synergistically with MAP3K13 to regulate the activation of NF-kappa-B in the cytosol. Required for the maintenance of physical strength. The chain is Thioredoxin-dependent peroxide reductase, mitochondrial (PRDX3) from Bos taurus (Bovine).